A 429-amino-acid polypeptide reads, in one-letter code: Adenylosuccinate synthetase (429 aa).

GTP is bound by residues 12–18 and 40–42; these read GDEGKGK and GHT. The active-site Proton acceptor is the Asp13. Asp13 and Gly40 together coordinate Mg(2+). Residues 13–16, 38–41, Thr128, Arg142, Gln223, Thr238, and Arg302 each bind IMP; these read DEGK and NAGH. Catalysis depends on His41, which acts as the Proton donor. 298–304 provides a ligand contact to substrate; sequence TTTGRPR. Residues Arg304, 330–332, and 412–414 each bind GTP; these read SID and SVG.

Belongs to the adenylosuccinate synthetase family. Homodimer. The cofactor is Mg(2+).

The protein resides in the cytoplasm. It catalyses the reaction IMP + L-aspartate + GTP = N(6)-(1,2-dicarboxyethyl)-AMP + GDP + phosphate + 2 H(+). The protein operates within purine metabolism; AMP biosynthesis via de novo pathway; AMP from IMP: step 1/2. Functionally, plays an important role in the de novo pathway of purine nucleotide biosynthesis. Catalyzes the first committed step in the biosynthesis of AMP from IMP. The chain is Adenylosuccinate synthetase from Lysinibacillus sphaericus (strain C3-41).